A 98-amino-acid polypeptide reads, in one-letter code: NADH-ubiquinone oxidoreductase chain 4L (98 aa).

3 consecutive transmembrane segments (helical) span residues 1 to 21 (MSLV…GLLM), 29 to 49 (ALLC…LTIL), and 61 to 81 (IILL…LVMV).

This sequence belongs to the complex I subunit 4L family. In terms of assembly, core subunit of respiratory chain NADH dehydrogenase (Complex I) which is composed of 45 different subunits.

Its subcellular location is the mitochondrion inner membrane. It carries out the reaction a ubiquinone + NADH + 5 H(+)(in) = a ubiquinol + NAD(+) + 4 H(+)(out). Core subunit of the mitochondrial membrane respiratory chain NADH dehydrogenase (Complex I) which catalyzes electron transfer from NADH through the respiratory chain, using ubiquinone as an electron acceptor. Part of the enzyme membrane arm which is embedded in the lipid bilayer and involved in proton translocation. This chain is NADH-ubiquinone oxidoreductase chain 4L (MT-ND4L), found in Lagenorhynchus albirostris (White-beaked dolphin).